The sequence spans 371 residues: tRNA-specific 2-thiouridylase MnmA (371 aa).

ATP is bound by residues 9-16 and M35; that span reads AMSGGVDS. The active-site Nucleophile is C109. The cysteines at positions 109 and 207 are disulfide-linked. G133 is a binding site for ATP. Residues 157 to 159 are interaction with tRNA; sequence KDQ. The active-site Cysteine persulfide intermediate is the C207.

Belongs to the MnmA/TRMU family.

It is found in the cytoplasm. It catalyses the reaction S-sulfanyl-L-cysteinyl-[protein] + uridine(34) in tRNA + AH2 + ATP = 2-thiouridine(34) in tRNA + L-cysteinyl-[protein] + A + AMP + diphosphate + H(+). Functionally, catalyzes the 2-thiolation of uridine at the wobble position (U34) of tRNA, leading to the formation of s(2)U34. This chain is tRNA-specific 2-thiouridylase MnmA, found in Solibacter usitatus (strain Ellin6076).